We begin with the raw amino-acid sequence, 752 residues long: Cation-transporting P-type ATPase B (752 aa).

The region spanning 15-78 (RRIRLDVSGM…VVEKAGYHAA (64 aa)) is the HMA domain. Residues cysteine 26 and cysteine 29 each contribute to the a metal cation site. Transmembrane regions (helical) follow at residues 105 to 125 (LLVA…FAIV), 132 to 152 (GWGY…AWPF), 167 to 187 (METL…SSVF), 201 to 221 (AILN…VFVL), 361 to 381 (IAGV…AAWL), and 390 to 410 (AFSV…GLAT). Aspartate 446 (4-aspartylphosphate intermediate) is an active-site residue. A helical transmembrane segment spans residues 714–734 (AIPIAAAGLLNPLIAGAAMAF).

It belongs to the cation transport ATPase (P-type) (TC 3.A.3) family. Type IB subfamily.

Its subcellular location is the cell membrane. The catalysed reaction is ATP + H2O = ADP + phosphate + H(+). The polypeptide is Cation-transporting P-type ATPase B (ctpB) (Mycobacterium bovis (strain ATCC BAA-935 / AF2122/97)).